Here is a 232-residue protein sequence, read N- to C-terminus: Cytochrome c oxidase subunit 2 (232 aa).

The Mitochondrial intermembrane segment spans residues Met-1–Ser-30. The helical transmembrane segment at Leu-31–Tyr-52 threads the bilayer. The Mitochondrial matrix segment spans residues Phe-53–Val-69. A helical transmembrane segment spans residues Phe-70–Tyr-89. At Gly-90–Asp-232 the chain is on the mitochondrial intermembrane side. Cu cation is bound by residues His-164, Cys-199, Glu-201, Cys-203, His-207, and Met-210. Residue Glu-201 coordinates Mg(2+).

The protein belongs to the cytochrome c oxidase subunit 2 family. Component of the cytochrome c oxidase (complex IV, CIV), a multisubunit enzyme composed of a catalytic core of 3 subunits and several supernumerary subunits. The complex exists as a monomer or a dimer and forms supercomplexes (SCs) in the inner mitochondrial membrane with ubiquinol-cytochrome c oxidoreductase (cytochrome b-c1 complex, complex III, CIII). It depends on Cu cation as a cofactor.

It localises to the mitochondrion inner membrane. The enzyme catalyses 4 Fe(II)-[cytochrome c] + O2 + 8 H(+)(in) = 4 Fe(III)-[cytochrome c] + 2 H2O + 4 H(+)(out). Functionally, component of the cytochrome c oxidase, the last enzyme in the mitochondrial electron transport chain which drives oxidative phosphorylation. The respiratory chain contains 3 multisubunit complexes succinate dehydrogenase (complex II, CII), ubiquinol-cytochrome c oxidoreductase (cytochrome b-c1 complex, complex III, CIII) and cytochrome c oxidase (complex IV, CIV), that cooperate to transfer electrons derived from NADH and succinate to molecular oxygen, creating an electrochemical gradient over the inner membrane that drives transmembrane transport and the ATP synthase. Cytochrome c oxidase is the component of the respiratory chain that catalyzes the reduction of oxygen to water. Electrons originating from reduced cytochrome c in the intermembrane space (IMS) are transferred via the dinuclear copper A center (CU(A)) of subunit 2 and heme A of subunit 1 to the active site in subunit 1, a binuclear center (BNC) formed by heme A3 and copper B (CU(B)). The BNC reduces molecular oxygen to 2 water molecules using 4 electrons from cytochrome c in the IMS and 4 protons from the mitochondrial matrix. This chain is Cytochrome c oxidase subunit 2 (COII), found in Ascaris suum (Pig roundworm).